We begin with the raw amino-acid sequence, 1196 residues long: Nucleolar protein 6 (1196 aa).

Disordered stretches follow at residues 1 to 75 (MPGK…VKPP) and 1140 to 1196 (KREQ…KALK). The span at 22-31 (HAEDHSDLEH) shows a compositional bias: basic and acidic residues. The segment covering 1165–1174 (KPKKHRKRKG) has biased composition (basic residues).

Belongs to the NRAP family. As to quaternary structure, part of the small subunit (SSU) processome, composed of more than 70 proteins and the RNA chaperone small nucleolar RNA (snoRNA) U3.

It is found in the nucleus. Its subcellular location is the nucleolus. The protein localises to the chromosome. Functionally, part of the small subunit (SSU) processome, first precursor of the small eukaryotic ribosomal subunit. During the assembly of the SSU processome in the nucleolus, many ribosome biogenesis factors, an RNA chaperone and ribosomal proteins associate with the nascent pre-rRNA and work in concert to generate RNA folding, modifications, rearrangements and cleavage as well as targeted degradation of pre-ribosomal RNA by the RNA exosome. This Drosophila sechellia (Fruit fly) protein is Nucleolar protein 6.